Consider the following 238-residue polypeptide: 3-dehydroquinate dehydratase (238 aa).

Residues 35–37 (ELR) and Arg-70 each bind 3-dehydroquinate. Residue His-133 is the Proton donor/acceptor of the active site. Lys-160 functions as the Schiff-base intermediate with substrate in the catalytic mechanism. The 3-dehydroquinate site is built by Arg-202 and Gln-225.

Belongs to the type-I 3-dehydroquinase family. Homodimer.

The enzyme catalyses 3-dehydroquinate = 3-dehydroshikimate + H2O. The protein operates within metabolic intermediate biosynthesis; chorismate biosynthesis; chorismate from D-erythrose 4-phosphate and phosphoenolpyruvate: step 3/7. Its function is as follows. Involved in the third step of the chorismate pathway, which leads to the biosynthesis of aromatic amino acids. Catalyzes the cis-dehydration of 3-dehydroquinate (DHQ) and introduces the first double bond of the aromatic ring to yield 3-dehydroshikimate. The polypeptide is 3-dehydroquinate dehydratase (Staphylococcus aureus (strain Mu3 / ATCC 700698)).